A 352-amino-acid chain; its full sequence is Ketoisovalerate oxidoreductase subunit VorB (352 aa).

As to quaternary structure, heterotrimer of the VorA, VorB and VorC subunits.

It carries out the reaction 3-methyl-2-oxobutanoate + 2 oxidized [2Fe-2S]-[ferredoxin] + CoA = 2-methylpropanoyl-CoA + 2 reduced [2Fe-2S]-[ferredoxin] + CO2 + H(+). This Methanothermobacter thermautotrophicus (strain ATCC 29096 / DSM 1053 / JCM 10044 / NBRC 100330 / Delta H) (Methanobacterium thermoautotrophicum) protein is Ketoisovalerate oxidoreductase subunit VorB (vorB).